Reading from the N-terminus, the 606-residue chain is Threonine--tRNA ligase (606 aa).

The segment at 212–503 (DHRKLGVEMK…LLEHTAGELP (292 aa)) is catalytic. Residues Cys-304, His-355, and His-480 each contribute to the Zn(2+) site.

It belongs to the class-II aminoacyl-tRNA synthetase family. As to quaternary structure, homodimer. The cofactor is Zn(2+).

The protein localises to the cytoplasm. It carries out the reaction tRNA(Thr) + L-threonine + ATP = L-threonyl-tRNA(Thr) + AMP + diphosphate + H(+). Functionally, catalyzes the attachment of threonine to tRNA(Thr) in a two-step reaction: L-threonine is first activated by ATP to form Thr-AMP and then transferred to the acceptor end of tRNA(Thr). Also edits incorrectly charged L-seryl-tRNA(Thr). This Campylobacter concisus (strain 13826) protein is Threonine--tRNA ligase.